The chain runs to 242 residues: 3-deoxy-manno-octulosonate cytidylyltransferase (242 aa).

This sequence belongs to the KdsB family.

It localises to the cytoplasm. It carries out the reaction 3-deoxy-alpha-D-manno-oct-2-ulosonate + CTP = CMP-3-deoxy-beta-D-manno-octulosonate + diphosphate. The protein operates within nucleotide-sugar biosynthesis; CMP-3-deoxy-D-manno-octulosonate biosynthesis; CMP-3-deoxy-D-manno-octulosonate from 3-deoxy-D-manno-octulosonate and CTP: step 1/1. Its pathway is bacterial outer membrane biogenesis; lipopolysaccharide biosynthesis. Activates KDO (a required 8-carbon sugar) for incorporation into bacterial lipopolysaccharide in Gram-negative bacteria. This Anaeromyxobacter dehalogenans (strain 2CP-1 / ATCC BAA-258) protein is 3-deoxy-manno-octulosonate cytidylyltransferase.